We begin with the raw amino-acid sequence, 417 residues long: Lissencephaly-1 homolog (417 aa).

Positions 7 to 39 (QKEELNGAILDYFDSSGYKLTSTEFTKETNIEL) constitute a LisH domain. Positions 52–80 (TSVIRLQKKVMDLEAKVSQLEEELNNGGR) form a coiled coil. The interval 72–93 (EEELNNGGRGPARRGKEDALPR) is disordered. WD repeat units lie at residues 102-143 (GHRN…RTLK), 144-185 (GHTN…KTLH), 186-225 (GHDH…CTKT), 228-267 (GHED…CLLT), 270-339 (EHSH…CLQT), 342-383 (GHDN…KTIN), and 385-417 (AHSH…WKLG).

This sequence belongs to the WD repeat LIS1/nudF family.

Its subcellular location is the cytoplasm. The protein localises to the cytoskeleton. It is found in the microtubule organizing center. The protein resides in the centrosome. In terms of biological role, positively regulates the activity of the minus-end directed microtubule motor protein dynein. May enhance dynein-mediated microtubule sliding by targeting dynein to the microtubule plus end. Required for several dynein- and microtubule-dependent processes. In Heterostelium pallidum (strain ATCC 26659 / Pp 5 / PN500) (Cellular slime mold), this protein is Lissencephaly-1 homolog.